Here is a 721-residue protein sequence, read N- to C-terminus: Polyribonucleotide nucleotidyltransferase (721 aa).

Mg(2+) is bound by residues Asp-486 and Asp-492. The KH domain maps to 553–612 (PKIVQLQIDIDKISLVIGSTGKTVKAITDEFEVKVQIEQNGKIILFGDDDFKMQKAKERI). An S1 motif domain is found at 622-716 (GEIYEGIVKK…KFGKIDLEVV (95 aa)).

Belongs to the polyribonucleotide nucleotidyltransferase family. Mg(2+) is required as a cofactor.

It localises to the cytoplasm. The catalysed reaction is RNA(n+1) + phosphate = RNA(n) + a ribonucleoside 5'-diphosphate. Involved in mRNA degradation. Catalyzes the phosphorolysis of single-stranded polyribonucleotides processively in the 3'- to 5'-direction. The sequence is that of Polyribonucleotide nucleotidyltransferase from Borrelia garinii subsp. bavariensis (strain ATCC BAA-2496 / DSM 23469 / PBi) (Borreliella bavariensis).